Here is a 237-residue protein sequence, read N- to C-terminus: Chloride intracellular channel protein 3 (237 aa).

The interval 1 to 89 (MAETTKLQLF…EEFLEETLGP (89 aa)) is required for insertion into the membrane. In terms of domain architecture, GST N-terminal spans 13 to 91 (ASEDGESVGH…FLEETLGPPD (79 aa)). A G-site motif is present at residues 23–26 (CPSC). C23 and C26 are joined by a disulfide. A helical membrane pass occupies residues 25 to 45 (SCQRLFMVLLLKGVPFTLTTV). In terms of domain architecture, GST C-terminal spans 69-236 (DGDVKTDTLQ…LAAYQPAVHP (168 aa)). Residue S160 is modified to Phosphoserine.

The protein belongs to the chloride channel CLIC family. In terms of assembly, associated with the C-terminal of MAPK15.

The protein resides in the nucleus. It localises to the membrane. The protein localises to the cell membrane. It is found in the cytoplasm. Its subcellular location is the secreted. The protein resides in the extracellular space. It localises to the extracellular matrix. It catalyses the reaction chloride(in) = chloride(out). In terms of biological role, in the soluble state, catalyzes glutaredoxin-like thiol disulfide exchange reactions with reduced glutathione as electron donor. Reduced in a glutathione-dependent way and secreted into the extracellular matrix where it activates TGM2 and promotes blood vessel growth during tissue remodeling as occurs in tumorigenesis. Can reduce specific cysteines in TGM2 and regulate cofactor binding. Can insert into membranes and form outwardly rectifying chloride ion channels. May participate in cellular growth control. The chain is Chloride intracellular channel protein 3 from Mus musculus (Mouse).